Here is a 350-residue protein sequence, read N- to C-terminus: [LysW]-L-2-aminoadipate/[LysW]-L-glutamate phosphate reductase (350 aa).

Residue 10–13 participates in NADP(+) binding; sequence SGYT. The active site involves C150. An NADP(+)-binding site is contributed by N317.

The protein belongs to the NAGSA dehydrogenase family. Type 1 subfamily. LysY sub-subfamily.

The protein resides in the cytoplasm. The catalysed reaction is [amino-group carrier protein]-C-terminal-N-(1-carboxy-5-oxopentan-1-yl)-L-glutamine + phosphate + NADP(+) = [amino-group carrier protein]-C-terminal-N-(1-carboxy-5-phosphooxy-5-oxopentan-1-yl)-L-glutamine + NADPH + H(+). The enzyme catalyses [amino-group carrier protein]-C-terminal-gamma-(L-glutamyl-5-semialdehyde)-L-glutamate + phosphate + NADP(+) = [amino-group carrier protein]-C-terminal-gamma-(5-phospho-L-glutamyl)-L-glutamate + NADPH + H(+). The protein operates within amino-acid biosynthesis; L-lysine biosynthesis via AAA pathway; L-lysine from L-alpha-aminoadipate (Thermus route): step 3/5. Its pathway is amino-acid biosynthesis; L-arginine biosynthesis. Involved in both the arginine and lysine biosynthetic pathways. In Sulfolobus acidocaldarius (strain ATCC 33909 / DSM 639 / JCM 8929 / NBRC 15157 / NCIMB 11770), this protein is [LysW]-L-2-aminoadipate/[LysW]-L-glutamate phosphate reductase.